A 427-amino-acid polypeptide reads, in one-letter code: Indole diterpene prenyltransferase ptmD (427 aa).

77 to 78 (YV) serves as a coordination point for L-tryptophan. Positions 99, 186, 188, 259, 261, 263, 344, 409, and 413 each coordinate substrate.

Belongs to the tryptophan dimethylallyltransferase family.

It functions in the pathway secondary metabolite biosynthesis. Its function is as follows. Indole diterpene prenyltransferase; part of the gene cluster that mediates the biosynthesis of the indole diterpenes penitrems. The geranylgeranyl diphosphate (GGPP) synthase ptmG catalyzes the first step in penitrem biosynthesis via conversion of farnesyl pyrophosphate and isopentyl pyrophosphate into geranylgeranyl pyrophosphate (GGPP). Condensation of indole-3-glycerol phosphate with GGPP by the prenyl transferase ptmC then forms 3-geranylgeranylindole (3-GGI). Epoxidation by the FAD-dependent monooxygenase ptmM leads to a epoxidized-GGI that is substrate of the terpene cyclase ptmB for cyclization to yield paspaline. Paspaline is subsequently converted to 13-desoxypaxilline by the cytochrome P450 monooxygenase ptmP, the latter being then converted to paxilline by the cytochrome P450 monooxygenase ptmQ. Paxilline is converted to beta-paxitriol via C-10 ketoreduction by the short-chain dehydrogenase ptmH which can be monoprenylated at the C-20 by the indole diterpene prenyltransferase ptmD. A two-step elimination (acetylation and elimination) process performed by the O-acetyltransferase ptmV and ptmI leads to the production of the prenylated form of penijanthine. The FAD-linked oxidoreductase ptmO then converts the prenylated form of penijanthine into PC-M5 which is in turn transformed into PC-M4 by the aromatic dimethylallyltransferase ptmE. Five sequential oxidative transformations performed by the cytochrome P450 monooxygenases ptmK, ptmU, ptmL, ptmN and ptmJ yield the various penitrem compounds. PtmK, ptmU and ptmM are involved in the formation of the key bicyclic ring of penitrem C via the formation of the intermediates secopenitrem D and penitrem D. PtmL catalyzes the epoxidation of penitrem D and C to yield penitrem B and F, respectively. PtmJ catalyzes the last benzylic hydroxylation to convert penitrem B to prenitrem E and penitrem F to penitrem A. The chain is Indole diterpene prenyltransferase ptmD from Penicillium ochrochloron.